Here is a 490-residue protein sequence, read N- to C-terminus: Cytochrome P450 71B29 (490 aa).

Residues 1 to 21 form a helical membrane-spanning segment; that stretch reads MAIILCFLILLPLILIFLKKL. Cysteine 440 is a binding site for heme.

This sequence belongs to the cytochrome P450 family. It depends on heme as a cofactor.

Its subcellular location is the membrane. This is Cytochrome P450 71B29 (CYP71B29) from Arabidopsis thaliana (Mouse-ear cress).